We begin with the raw amino-acid sequence, 676 residues long: UvrABC system protein B (676 aa).

Residues 35 to 192 enclose the Helicase ATP-binding domain; sequence QGVADGLMYQ…ARLVAMQYTR (158 aa). 48–55 lines the ATP pocket; the sequence is GVTGSGKT. The Beta-hairpin signature appears at 101-124; that stretch reads YYDYYQPEAYVPTRDLFIEKDSSV. The Helicase C-terminal domain maps to 439–605; the sequence is QVDDLLGEIR…GVNKAVRELI (167 aa). One can recognise a UVR domain in the interval 634–669; sequence AREIKRLEKLMMDHARNLEFEQAAAARDALTALKNR.

It belongs to the UvrB family. Forms a heterotetramer with UvrA during the search for lesions. Interacts with UvrC in an incision complex.

The protein resides in the cytoplasm. In terms of biological role, the UvrABC repair system catalyzes the recognition and processing of DNA lesions. A damage recognition complex composed of 2 UvrA and 2 UvrB subunits scans DNA for abnormalities. Upon binding of the UvrA(2)B(2) complex to a putative damaged site, the DNA wraps around one UvrB monomer. DNA wrap is dependent on ATP binding by UvrB and probably causes local melting of the DNA helix, facilitating insertion of UvrB beta-hairpin between the DNA strands. Then UvrB probes one DNA strand for the presence of a lesion. If a lesion is found the UvrA subunits dissociate and the UvrB-DNA preincision complex is formed. This complex is subsequently bound by UvrC and the second UvrB is released. If no lesion is found, the DNA wraps around the other UvrB subunit that will check the other stand for damage. The chain is UvrABC system protein B from Bordetella avium (strain 197N).